Reading from the N-terminus, the 371-residue chain is Galanin receptor type 2 (371 aa).

Residues 1-27 (MNGSDSQGAEDSSQEGGGGWQPEAVLV) are Extracellular-facing. Asn-2 is a glycosylation site (N-linked (GlcNAc...) asparagine). The chain crosses the membrane as a helical span at residues 28 to 48 (PLFFALIFLVGAVGNALVLAV). Residues 49–59 (LLRGGQAVSTT) are Cytoplasmic-facing. The chain crosses the membrane as a helical span at residues 60–80 (NLFILNLGVADLCFILCCVPF). Over 81–98 (QATIYTLDDWVFGSLLCK) the chain is Extracellular. The cysteines at positions 97 and 174 are disulfide-linked. A helical transmembrane segment spans residues 99 to 120 (AVHFLIFLTMHASSFTLAAVSL). The Cytoplasmic segment spans residues 121–140 (DRYLAIRYPLHSRELRTPRN). Residues 141–161 (ALAAIGLIWGLALLFSGPYLS) form a helical membrane-spanning segment. Over 162 to 186 (YYSQSQLANLTVCHPAWSAPRRRAM) the chain is Extracellular. A helical membrane pass occupies residues 187 to 207 (DLCTFVFSYLLPVLVLSLTYA). Residues 208–236 (RTLHYLWRTVDPVAAGSGSQRAKRKVTRM) lie on the Cytoplasmic side of the membrane. Residues 237–257 (IVIVAVLFCLCWMPHHALILC) traverse the membrane as a helical segment. Over 258–259 (VW) the chain is Extracellular. Residues 260–280 (FGRFPLTRATYALRILSHLVS) traverse the membrane as a helical segment. Over 281–371 (YANSCVNPIV…TLSRTLDPAC (91 aa)) the chain is Cytoplasmic.

This sequence belongs to the G-protein coupled receptor 1 family.

It is found in the cell membrane. In terms of biological role, receptor for the hormone galanin, GALP and spexin-1. The activity of this receptor is mediated by G proteins that activate the phospholipase C/protein kinase C pathway (via G(q)) and that inhibit adenylyl cyclase (via G(i)). The polypeptide is Galanin receptor type 2 (Galr2) (Mus musculus (Mouse)).